Consider the following 176-residue polypeptide: SsrA-binding protein (176 aa).

Residues 1-33 (MTEAGAKKAAGKKSGKGKGKNAKKNQPNITPVA) form a disordered region. Over residues 9–23 (AAGKKSGKGKGKNAK) the composition is skewed to basic residues.

The protein belongs to the SmpB family.

It localises to the cytoplasm. Its function is as follows. Required for rescue of stalled ribosomes mediated by trans-translation. Binds to transfer-messenger RNA (tmRNA), required for stable association of tmRNA with ribosomes. tmRNA and SmpB together mimic tRNA shape, replacing the anticodon stem-loop with SmpB. tmRNA is encoded by the ssrA gene; the 2 termini fold to resemble tRNA(Ala) and it encodes a 'tag peptide', a short internal open reading frame. During trans-translation Ala-aminoacylated tmRNA acts like a tRNA, entering the A-site of stalled ribosomes, displacing the stalled mRNA. The ribosome then switches to translate the ORF on the tmRNA; the nascent peptide is terminated with the 'tag peptide' encoded by the tmRNA and targeted for degradation. The ribosome is freed to recommence translation, which seems to be the essential function of trans-translation. The protein is SsrA-binding protein of Rhodopirellula baltica (strain DSM 10527 / NCIMB 13988 / SH1).